The primary structure comprises 198 residues: MEHYISLLVKSIFIENMALSFFLGMCTFLAVSKKVKTSFGLGVAVVVVLTIAVPVNNLVYNLVLRENALVEGVDLSFLNFITFIGVIAALVQILEMVLDRFFPPLYNALGIFLPLITVNCAIFGGVSFMVQRDYNFAESIVYGFGSGVGWMLAIVALAGIREKMKYSDVPPGLRGLGITFITVGLMALGFMSFSGVQL.

6 consecutive transmembrane segments (helical) span residues 11 to 31 (SIFI…FLAV), 39 to 59 (FGLG…NNLV), 77 to 97 (FLNF…LEMV), 110 to 130 (GIFL…SFMV), 140 to 160 (IVYG…LAGI), and 176 to 196 (LGIT…FSGV).

Belongs to the NqrDE/RnfAE family. As to quaternary structure, composed of six subunits; NqrA, NqrB, NqrC, NqrD, NqrE and NqrF. Post-translationally, the N-terminus is blocked.

It localises to the cell inner membrane. It carries out the reaction a ubiquinone + n Na(+)(in) + NADH + H(+) = a ubiquinol + n Na(+)(out) + NAD(+). With respect to regulation, this reaction is tightly coupled to the Na(+) pumping activity and specifically requires Na(+) for activity. Inhibited by korormicin and 2-N-heptyl-4-hydroxyquinoline N-oxide (HQNO). Functionally, NQR complex catalyzes the reduction of ubiquinone-1 to ubiquinol by two successive reactions, coupled with the transport of Na(+) ions from the cytoplasm to the periplasm. NqrA to NqrE are probably involved in the second step, the conversion of ubisemiquinone to ubiquinol. In Vibrio alginolyticus, this protein is Na(+)-translocating NADH-quinone reductase subunit E.